A 76-amino-acid chain; its full sequence is Small ribosomal subunit protein bS16 (76 aa).

It belongs to the bacterial ribosomal protein bS16 family.

This chain is Small ribosomal subunit protein bS16, found in Helicobacter pylori (strain HPAG1).